The chain runs to 438 residues: Aspartate--tRNA(Asp/Asn) ligase (438 aa).

Residue Glu176 coordinates L-aspartate. An aspartate region spans residues 198-201; the sequence is QLYK. Arg220 is a binding site for L-aspartate. Residues 220–222, 228–230, and Glu361 contribute to the ATP site; these read RAE and RHL. The Mg(2+) site is built by Glu361 and Ser364. Positions 364 and 368 each coordinate L-aspartate. 409–412 contributes to the ATP binding site; that stretch reads GADR.

The protein belongs to the class-II aminoacyl-tRNA synthetase family. Type 2 subfamily. In terms of assembly, homodimer. It depends on Mg(2+) as a cofactor.

It is found in the cytoplasm. The enzyme catalyses tRNA(Asx) + L-aspartate + ATP = L-aspartyl-tRNA(Asx) + AMP + diphosphate. Aspartyl-tRNA synthetase with relaxed tRNA specificity since it is able to aspartylate not only its cognate tRNA(Asp) but also tRNA(Asn). Reaction proceeds in two steps: L-aspartate is first activated by ATP to form Asp-AMP and then transferred to the acceptor end of tRNA(Asp/Asn). In Methanococcus maripaludis (strain DSM 14266 / JCM 13030 / NBRC 101832 / S2 / LL), this protein is Aspartate--tRNA(Asp/Asn) ligase.